The chain runs to 484 residues: Ureidoglycolate hydrolase (484 aa).

The N-terminal stretch at 1–28 is a signal peptide; sequence MATSAAARFLAALAGAAVLLVLLGGAAG. Residues His148, Asp159, Glu194, and His262 each coordinate Mn(2+). Substrate regions lie at residues 193-194 and 262-265; these read EE and HIEQ. The involved in dimerization stretch occupies residues 284 to 399; sequence APASIKVEFE…LSEFKIINQD (116 aa). Substrate is bound by residues His298, Asn348, and Arg361. Residues 431-432 are substrate; that stretch reads YH. Residue His456 coordinates Mn(2+). His456 contributes to the substrate binding site.

Belongs to the peptidase M20 family. As to quaternary structure, homodimer. Mn(2+) serves as cofactor. It depends on Ni(2+) as a cofactor. Requires Co(2+) as cofactor.

It localises to the endoplasmic reticulum. The catalysed reaction is (S)-ureidoglycolate + H2O + 2 H(+) = glyoxylate + 2 NH4(+) + CO2. It functions in the pathway nitrogen metabolism; (S)-allantoin degradation; glyoxylate from (S)-ureidoglycolate: step 1/1. Involved in the catabolism of purine nucleotides. The sequential activity of AAH, UGLYAH and UAH allows a complete purine breakdown without the intermediate generation of urea. The sequence is that of Ureidoglycolate hydrolase from Oryza sativa subsp. japonica (Rice).